Consider the following 283-residue polypeptide: N-terminal Xaa-Pro-Lys N-methyltransferase 2 (283 aa).

Residues G124, R129, D146, 174–175, and Q190 each bind S-adenosyl-L-methionine; that span reads LQ.

The protein belongs to the methyltransferase superfamily. NTM1 family.

It is found in the nucleus. It carries out the reaction N-terminal L-alanyl-L-prolyl-L-lysyl-[protein] + S-adenosyl-L-methionine = N-terminal N-methyl-L-alanyl-L-prolyl-L-lysyl-[protein] + S-adenosyl-L-homocysteine + H(+). The enzyme catalyses N-terminal L-prolyl-L-prolyl-L-lysyl-[protein] + S-adenosyl-L-methionine = N-terminal N-methyl-L-prolyl-L-prolyl-L-lysyl-[protein] + S-adenosyl-L-homocysteine + H(+). It catalyses the reaction N-terminal L-seryl-L-prolyl-L-lysyl-[protein] + S-adenosyl-L-methionine = N-terminal N-methyl-L-seryl-L-prolyl-L-lysyl-[protein] + S-adenosyl-L-homocysteine + H(+). In terms of biological role, alpha N-methyltransferase that methylates the N-terminus of target proteins containing the N-terminal motif [Ala/Pro/Ser]-Pro-Lys when the initiator Met is cleaved. Specifically catalyzes monomethylation of exposed alpha-amino group of Ala or Ser residue in the [Ala/Ser]-Pro-Lys motif and Pro in the Pro-Pro-Lys motif. Predominantly functions as a mono-methyltransferase but is also able to di-/tri-methylate the GPKRIA peptide and di-methylate the PPKRIA peptide (in vitro). May activate NTMT1 by priming its substrates for trimethylation. In Rattus norvegicus (Rat), this protein is N-terminal Xaa-Pro-Lys N-methyltransferase 2 (Ntmt2).